Here is a 130-residue protein sequence, read N- to C-terminus: Holo-[acyl-carrier-protein] synthase (130 aa).

Mg(2+) is bound by residues D8 and E62.

This sequence belongs to the P-Pant transferase superfamily. AcpS family. Mg(2+) serves as cofactor.

It localises to the cytoplasm. It carries out the reaction apo-[ACP] + CoA = holo-[ACP] + adenosine 3',5'-bisphosphate + H(+). Transfers the 4'-phosphopantetheine moiety from coenzyme A to a Ser of acyl-carrier-protein. The protein is Holo-[acyl-carrier-protein] synthase of Herminiimonas arsenicoxydans.